The primary structure comprises 186 residues: GMP synthase [glutamine-hydrolyzing] subunit A (186 aa).

In terms of domain architecture, Glutamine amidotransferase type-1 spans 3 to 186; it reads MILIINNHGQ…FENFYDVCRS (184 aa). Residue Cys-77 is the Nucleophile of the active site. Active-site residues include His-164 and Glu-166.

Heterodimer composed of a glutamine amidotransferase subunit (A) and a GMP-binding subunit (B).

The enzyme catalyses XMP + L-glutamine + ATP + H2O = GMP + L-glutamate + AMP + diphosphate + 2 H(+). Its pathway is purine metabolism; GMP biosynthesis; GMP from XMP (L-Gln route): step 1/1. Functionally, catalyzes the synthesis of GMP from XMP. This Methanothermobacter thermautotrophicus (strain ATCC 29096 / DSM 1053 / JCM 10044 / NBRC 100330 / Delta H) (Methanobacterium thermoautotrophicum) protein is GMP synthase [glutamine-hydrolyzing] subunit A.